The chain runs to 85 residues: Beta-insect depressant toxin Lqh-dprIT3a (85 aa).

Residues 1–21 form the signal peptide; the sequence is MKLLLLLTISASMLIEGLVNA. Residues 22–82 enclose the LCN-type CS-alpha/beta domain; the sequence is DGYIRGGDGC…EWDYETNTCG (61 aa). 4 disulfides stabilise this stretch: cysteine 31/cysteine 81, cysteine 35/cysteine 56, cysteine 42/cysteine 63, and cysteine 46/cysteine 65. Glycine 82 carries the post-translational modification Glycine amide.

The protein belongs to the long (4 C-C) scorpion toxin superfamily. Sodium channel inhibitor family. Beta subfamily. In terms of tissue distribution, expressed by the venom gland.

Its subcellular location is the secreted. Depressant insect beta-toxins cause a transient contraction paralysis followed by a slow flaccid paralysis. They bind voltage-independently at site-4 of sodium channels (Nav) and block action potentials, primarily by depolarizing the axonal membrane and suppressing the sodium current. This depressant toxin is active only on insects. It is found in a relatively small amount in the venom, and its activity on insects is 10-fold higher compared to other known depressant toxins. In Leiurus hebraeus (Hebrew deathstalker scorpion), this protein is Beta-insect depressant toxin Lqh-dprIT3a.